The sequence spans 712 residues: Lactoperoxidase (712 aa).

The first 21 residues, 1 to 21 (MLVCLHLQVFLASVALFEVAA), serve as a signal peptide directing secretion. Positions 22–117 (SDTIAQAAST…TDPSLDLTAL (96 aa)) are excised as a propeptide. N-linked (GlcNAc...) (complex) asparagine; alternate glycosylation is present at Asn106. Asn106 is a glycosylation site (N-linked (GlcNAc...) (hybrid) asparagine; alternate). Intrachain disulfides connect Cys123–Cys284, Cys132–Cys145, Cys246–Cys256, and Cys250–Cys274. N-linked (GlcNAc...) (complex) asparagine; alternate glycosylation occurs at Asn212. An N-linked (GlcNAc...) (hybrid) asparagine; alternate glycan is attached at Asn212. Heme b is bound at residue Asp225. The active-site Proton acceptor is the His226. Residue Asp227 coordinates Ca(2+). Residues Thr301, Phe303, Asp305, and Ser307 each coordinate Ca(2+). A Phosphoserine modification is found at Ser315. The N-linked (GlcNAc...) (high mannose) asparagine glycan is linked to Asn322. Cys354 and Cys365 are disulfide-bonded. N-linked (GlcNAc...) asparagine glycosylation is present at Asn358. Heme b is bound at residue Glu375. Residue Asn449 is glycosylated (N-linked (GlcNAc...) (complex) asparagine; alternate). N-linked (GlcNAc...) (hybrid) asparagine; alternate glycosylation occurs at Asn449. Asn449 carries an N-linked (GlcNAc...) (high mannose) asparagine; alternate glycan. His468 serves as a coordination point for heme b. At Tyr482 the chain carries 3'-nitrotyrosine. Intrachain disulfides connect Cys573–Cys630 and Cys671–Cys696.

This sequence belongs to the peroxidase family. XPO subfamily. It depends on Ca(2+) as a cofactor. Heme b is required as a cofactor. In terms of tissue distribution, mammary gland; milk.

The protein localises to the secreted. Its subcellular location is the cytoplasm. The catalysed reaction is 2 a phenolic donor + H2O2 = 2 a phenolic radical donor + 2 H2O. It carries out the reaction thiocyanate + H2O2 + H(+) = hypothiocyanous acid + H2O. The enzyme catalyses iodide + H2O2 = hypoiodite + H2O. With respect to regulation, inhibited by small molecule methimazole (MMZ). Heme-containing oxidoreductase which catalyzes the conversion of thiocyanate (SCN(-)) into antimicrobial agent hypothiocyanous acid (OSCN(-)) in the presence of hydrogen peroxide (H2O2). Also involved in the conversion of iodide (I(-)) into hypoiodite (IO(-)) in the presence of H2O2. Responsible for the inactivation of a wide range of micro-organisms and hence, important component of defense mechanism. Shows antibacterial properties against several Gram-positive bacteria including some Staphylococcus species and Gram-negative bacteria including E.coli, P.aeruginosa and some Salmonella species. Inhibits the growth of several fungi including A.niger, Trichoderma species, C.cassicola, P.meadii and C.salmonicolor. Does not have anti-fungal activity towards C.albicans and Pythium species. May protect the udder from infection and may promote growth in newborns. May be implicated in airway host defense against infection. May contribute to maintaining an appropriate H2O2 cellular level, therefore protecting cells from H2O2-caused injuries and inflammation. The polypeptide is Lactoperoxidase (LPO) (Capra hircus (Goat)).